A 345-amino-acid chain; its full sequence is S-adenosylmethionine:tRNA ribosyltransferase-isomerase (345 aa).

It belongs to the QueA family. In terms of assembly, monomer.

The protein localises to the cytoplasm. It catalyses the reaction 7-aminomethyl-7-carbaguanosine(34) in tRNA + S-adenosyl-L-methionine = epoxyqueuosine(34) in tRNA + adenine + L-methionine + 2 H(+). The protein operates within tRNA modification; tRNA-queuosine biosynthesis. Transfers and isomerizes the ribose moiety from AdoMet to the 7-aminomethyl group of 7-deazaguanine (preQ1-tRNA) to give epoxyqueuosine (oQ-tRNA). This Shewanella sp. (strain MR-4) protein is S-adenosylmethionine:tRNA ribosyltransferase-isomerase.